Consider the following 93-residue polypeptide: Protein S100-A8 (93 aa).

EF-hand domains follow at residues 12–47 (IIDV…QYIR) and 46–81 (IRKK…MGVA). Positions 17 and 27 each coordinate Zn(2+). Position 33 (Asp33) interacts with Ca(2+). The residue at position 42 (Cys42) is an S-nitrosocysteine. Residues Asp59, Asn61, Asp63, and Glu70 each contribute to the Ca(2+) site. Zn(2+)-binding residues include His83 and His87.

Belongs to the S-100 family. Homodimer. Preferentially exists as a heterodimer or heterotetramer with S100A9 known as calprotectin (S100A8/A9). S100A8 interacts with AGER, ATP2A2 and with the heterodimeric complex formed by TLR4 and LY96. Interacts with GAPDH. Calprotectin (S100A8/9) interacts with CEACAM3 and tubulin filaments in a calcium-dependent manner. Heterotetrameric calprotectin (S100A8/A9) interacts with ANXA6 and associates with tubulin filaments in activated monocytes. S100A8 and calprotectin (S100A8/9) interact with NCF2/P67PHOX, RAC1 and RAC2. Calprotectin (S100A8/9) interacts with CYBA and CYBB. Calprotectin (S100A8/9) interacts with NOS2 to form the iNOS-S100A8/A9 transnitrosylase complex; induced by LDL(ox). Calprotectin (S100A8/9) interacts with CD69. Calprotectin (S100A8/9) is predominantly expressed in myeloid cells. Except for inflammatory conditions, the expression is restricted to a specific stage of myeloid differentiation since both proteins are expressed in circulating neutrophils and monocytes but are absent in normal tissue macrophages and lymphocytes. Under chronic inflammatory conditions, such as psoriasis and malignant disorders, also expressed in the epidermis. Found in high concentrations at local sites of inflammation or in the serum of patients with inflammatory diseases such as rheumatoid, cystic fibrosis, inflammatory bowel disease, Crohn's disease, giant cell arteritis, cystic fibrosis, Sjogren's syndrome, systemic lupus erythematosus, and progressive systemic sclerosis. Involved in the formation and deposition of amyloids in the aging prostate known as corpora amylacea inclusions. Strongly up-regulated in many tumors, including gastric, esophageal, colon, pancreatic, bladder, ovarian, thyroid, breast and skin cancers.

The protein resides in the secreted. It is found in the cytoplasm. Its subcellular location is the cytoskeleton. The protein localises to the cell membrane. Calprotectin (S100A8/A9) activity on TLR4 signaling is inhibited by paquinimod. Functionally, S100A8 is a calcium- and zinc-binding protein which plays a prominent role in the regulation of inflammatory processes and immune response. It can induce neutrophil chemotaxis and adhesion. Predominantly found as calprotectin (S100A8/A9) which has a wide plethora of intra- and extracellular functions. The intracellular functions include: facilitating leukocyte arachidonic acid trafficking and metabolism, modulation of the tubulin-dependent cytoskeleton during migration of phagocytes and activation of the neutrophilic NADPH-oxidase. Also participates in regulatory T-cell differentiation together with CD69. Activates NADPH-oxidase by facilitating the enzyme complex assembly at the cell membrane, transferring arachidonic acid, an essential cofactor, to the enzyme complex and S100A8 contributes to the enzyme assembly by directly binding to NCF2/P67PHOX. The extracellular functions involve pro-inflammatory, antimicrobial, oxidant-scavenging and apoptosis-inducing activities. Its pro-inflammatory activity includes recruitment of leukocytes, promotion of cytokine and chemokine production, and regulation of leukocyte adhesion and migration. Acts as an alarmin or a danger associated molecular pattern (DAMP) molecule and stimulates innate immune cells via binding to pattern recognition receptors such as Toll-like receptor 4 (TLR4) and receptor for advanced glycation endproducts (AGER). Binding to TLR4 and AGER activates the MAP-kinase and NF-kappa-B signaling pathways resulting in the amplification of the pro-inflammatory cascade. Has antimicrobial activity towards bacteria and fungi and exerts its antimicrobial activity probably via chelation of Zn(2+) which is essential for microbial growth. Can induce cell death via autophagy and apoptosis and this occurs through the cross-talk of mitochondria and lysosomes via reactive oxygen species (ROS) and the process involves BNIP3. Can regulate neutrophil number and apoptosis by an anti-apoptotic effect; regulates cell survival via ITGAM/ITGB and TLR4 and a signaling mechanism involving MEK-ERK. Its role as an oxidant scavenger has a protective role in preventing exaggerated tissue damage by scavenging oxidants. Can act as a potent amplifier of inflammation in autoimmunity as well as in cancer development and tumor spread. The iNOS-S100A8/A9 transnitrosylase complex directs selective inflammatory stimulus-dependent S-nitrosylation of GAPDH and probably multiple targets such as ANXA5, EZR, MSN and VIM by recognizing a [IL]-x-C-x-x-[DE] motif; S100A8 seems to contribute to S-nitrosylation site selectivity. Its function is as follows. (Microbial infection) Upon infection by human coronavirus SARS-CoV-2, may induce expansion of aberrant immature neutrophils in a TLR4-dependent manner. This Homo sapiens (Human) protein is Protein S100-A8.